The sequence spans 361 residues: Single-stranded DNA-binding protein 2 (361 aa).

Lys-6 bears the N6-acetyllysine mark. The region spanning 18-50 (AREKLALYVYEYLLHVGAQKSAQTFLSEIRWEK) is the LisH domain. 2 disordered regions span residues 147–171 (GGVP…HPNM) and 194–361 (GAMR…TMSV). Over residues 204 to 219 (GGPGMPGMNMGPGGGR) the composition is skewed to gly residues. A compositionally biased stretch (polar residues) spans 225-236 (TNANSIPYSSAS). Pro residues predominate over residues 246–256 (GGGPPGTPIMP). The segment covering 289–299 (GSDGPMGGLGG) has biased composition (gly residues). The span at 317 to 332 (ISKNSPNNMSLSNQPG) shows a compositional bias: polar residues. A Phosphoserine modification is found at Ser-321. At Thr-333 the chain carries Phosphothreonine. The segment covering 346–361 (NPFQSESYSPSMTMSV) has biased composition (polar residues).

Ubiquitous.

Its subcellular location is the nucleus. In Homo sapiens (Human), this protein is Single-stranded DNA-binding protein 2 (SSBP2).